Consider the following 33-residue polypeptide: Ice-structuring protein GS-5 (33 aa).

A Blocked amino end (Met) modification is found at Met-1.

The protein belongs to the type-I AFP family.

Antifreeze proteins lower the blood freezing point. In Myoxocephalus aenaeus (Grubby sculpin), this protein is Ice-structuring protein GS-5.